An 829-amino-acid chain; its full sequence is FAST kinase domain-containing protein 1, mitochondrial (829 aa).

The residue at position 346 (K346) is an N6-acetyllysine. The RAP domain maps to 761–821 (IAIELLDVRA…KDARMDYLRE (61 aa)).

The protein belongs to the FAST kinase family. Expression detected in spleen, testis, colon, heart, smooth muscle, kidney, brain, lung, liver, brown and white adipose tissue with highest expression in heart and brown adipose tissue.

The protein resides in the mitochondrion. Involved in the down-regulation of mitochondrial MT-ND3 mRNA levels which leads to decreased respiratory complex I abundance and activity. The sequence is that of FAST kinase domain-containing protein 1, mitochondrial (Fastkd1) from Mus musculus (Mouse).